A 232-amino-acid chain; its full sequence is Pseudaminic acid cytidylyltransferase (232 aa).

The protein belongs to the CMP-NeuNAc synthase family. The cofactor is Mg(2+).

The enzyme catalyses pseudaminate + CTP = CMP-pseudaminate + diphosphate. Catalyzes the final step in the biosynthesis of pseudaminic acid, a sialic-acid-like sugar that is used to modify flagellin. Mediates the activation of pseudaminic acid with CMP by forming CMP-pseudaminic acid. The chain is Pseudaminic acid cytidylyltransferase (pseF) from Campylobacter jejuni subsp. jejuni serotype O:23/36 (strain 81-176).